A 368-amino-acid polypeptide reads, in one-letter code: Flagellar P-ring protein (368 aa).

A signal peptide spans 1 to 22 (MLIPLARAVLALELLGAGAAHA).

It belongs to the FlgI family. As to quaternary structure, the basal body constitutes a major portion of the flagellar organelle and consists of four rings (L,P,S, and M) mounted on a central rod.

It localises to the periplasm. Its subcellular location is the bacterial flagellum basal body. Assembles around the rod to form the L-ring and probably protects the motor/basal body from shearing forces during rotation. The chain is Flagellar P-ring protein from Bordetella pertussis (strain Tohama I / ATCC BAA-589 / NCTC 13251).